A 51-amino-acid chain; its full sequence is Large ribosomal subunit protein eL39 (51 aa).

A compositionally biased stretch (basic residues) spans 1–15 (MPSHKSFRTKQKLAK). The disordered stretch occupies residues 1–21 (MPSHKSFRTKQKLAKAARQNR).

This sequence belongs to the eukaryotic ribosomal protein eL39 family. Component of the large ribosomal subunit (LSU). Mature yeast ribosomes consist of a small (40S) and a large (60S) subunit. The 40S small subunit contains 1 molecule of ribosomal RNA (18S rRNA) and at least 33 different proteins. The large 60S subunit contains 3 rRNA molecules (25S, 5.8S and 5S rRNA) and at least 46 different proteins. eL39 interacts with yih1.

It localises to the cytoplasm. Component of the ribosome, a large ribonucleoprotein complex responsible for the synthesis of proteins in the cell. The small ribosomal subunit (SSU) binds messenger RNAs (mRNAs) and translates the encoded message by selecting cognate aminoacyl-transfer RNA (tRNA) molecules. The large subunit (LSU) contains the ribosomal catalytic site termed the peptidyl transferase center (PTC), which catalyzes the formation of peptide bonds, thereby polymerizing the amino acids delivered by tRNAs into a polypeptide chain. The nascent polypeptides leave the ribosome through a tunnel in the LSU and interact with protein factors that function in enzymatic processing, targeting, and the membrane insertion of nascent chains at the exit of the ribosomal tunnel. The polypeptide is Large ribosomal subunit protein eL39 (rpl39) (Schizosaccharomyces pombe (strain 972 / ATCC 24843) (Fission yeast)).